The chain runs to 258 residues: Thiamine thiazole synthase (258 aa).

NAD(+) contacts are provided by residues Ser-36, Glu-55–Arg-56, Gly-63, Ile-127, and His-153–Asp-155. Asp-155 and His-170 together coordinate Fe cation. Met-224 is a binding site for NAD(+). Arg-234 is a binding site for glycine.

The protein belongs to the THI4 family. In terms of assembly, homooctamer; tetramer of dimers. Fe(2+) is required as a cofactor.

The catalysed reaction is hydrogen sulfide + glycine + NAD(+) = ADP-5-ethyl-4-methylthiazole-2-carboxylate + nicotinamide + 3 H2O + H(+). It functions in the pathway cofactor biosynthesis; thiamine diphosphate biosynthesis. In terms of biological role, involved in the biosynthesis of the thiazole moiety of thiamine. Catalyzes the conversion of NAD and glycine to adenosine diphosphate 5-(2-hydroxyethyl)-4-methylthiazole-2-carboxylate (ADT), an adenylated thiazole intermediate, using free sulfide as a source of sulfur. The sequence is that of Thiamine thiazole synthase from Methanothermobacter thermautotrophicus (strain ATCC 29096 / DSM 1053 / JCM 10044 / NBRC 100330 / Delta H) (Methanobacterium thermoautotrophicum).